Here is a 235-residue protein sequence, read N- to C-terminus: Uridylate kinase (235 aa).

10 to 11 is an ATP binding site; the sequence is GS. Residue Gly45 coordinates UMP. Residues Gly46 and Arg50 each coordinate ATP. UMP is bound by residues Asp67 and 115 to 121; that span reads VTPGQTT. ATP contacts are provided by Thr141, Tyr147, and Asp150.

The protein belongs to the UMP kinase family. Homohexamer.

The protein localises to the cytoplasm. The enzyme catalyses UMP + ATP = UDP + ADP. It participates in pyrimidine metabolism; CTP biosynthesis via de novo pathway; UDP from UMP (UMPK route): step 1/1. With respect to regulation, inhibited by UTP. In terms of biological role, catalyzes the reversible phosphorylation of UMP to UDP. The polypeptide is Uridylate kinase (Methanocorpusculum labreanum (strain ATCC 43576 / DSM 4855 / Z)).